Here is a 290-residue protein sequence, read N- to C-terminus: Glutamate 5-kinase (290 aa).

Lys-21 contacts ATP. Residues Ser-60, Asp-151, and Asn-163 each contribute to the substrate site. 217–223 serves as a coordination point for ATP; that stretch reads TGGMFTK.

The protein belongs to the glutamate 5-kinase family.

Its subcellular location is the cytoplasm. The catalysed reaction is L-glutamate + ATP = L-glutamyl 5-phosphate + ADP. It participates in amino-acid biosynthesis; L-proline biosynthesis; L-glutamate 5-semialdehyde from L-glutamate: step 1/2. Catalyzes the transfer of a phosphate group to glutamate to form L-glutamate 5-phosphate. This chain is Glutamate 5-kinase, found in Leptospira interrogans serogroup Icterohaemorrhagiae serovar copenhageni (strain Fiocruz L1-130).